Consider the following 242-residue polypeptide: AA9 family lytic polysaccharide monooxygenase F (242 aa).

Positions 1–20 (MVQFKLSTASLLALASYAAA) are cleaved as a signal peptide. His21 is a binding site for Cu(2+). The segment at 31 to 53 (GQTYPGADPHNPNPESPGWQAEN) is disordered. 2 disulfides stabilise this stretch: Cys71–Cys192 and Cys112–Cys116. Residue His101 coordinates Cu(2+). The O2 site is built by His178 and Gln187. Residue Tyr189 participates in Cu(2+) binding.

It belongs to the polysaccharide monooxygenase AA9 family. Requires Cu(2+) as cofactor.

Its subcellular location is the secreted. The catalysed reaction is [(1-&gt;4)-beta-D-glucosyl]n+m + reduced acceptor + O2 = 4-dehydro-beta-D-glucosyl-[(1-&gt;4)-beta-D-glucosyl]n-1 + [(1-&gt;4)-beta-D-glucosyl]m + acceptor + H2O.. In terms of biological role, lytic polysaccharide monooxygenase (LPMO) that depolymerizes crystalline and amorphous polysaccharides via the oxidation of scissile alpha- or beta-(1-4)-glycosidic bonds, yielding C1 or C4 oxidation products. Catalysis by LPMOs requires the reduction of the active-site copper from Cu(II) to Cu(I) by a reducing agent and H(2)O(2) or O(2) as a cosubstrate. Active on hemicelluloses, including xylan, glucomannan, and xyloglucan. Shows clear activity on cellooligosaccharides, generating C4 oxidation products. Has no activity on ivory nut mannan (INM), a linear beta-1,4-linked mannan without substitutions. This is AA9 family lytic polysaccharide monooxygenase F from Malbranchea cinnamomea (Thermophilic fungus).